We begin with the raw amino-acid sequence, 133 residues long: Small ribosomal subunit protein uS11 (133 aa).

Residues 1–23 are disordered; it reads MPPKTRGAVRKPRKKDKKNIALG. Positions 7–17 are enriched in basic residues; sequence GAVRKPRKKDK.

This sequence belongs to the universal ribosomal protein uS11 family. Part of the 30S ribosomal subunit. Interacts with proteins S7 and S18. Binds to IF-3.

In terms of biological role, located on the platform of the 30S subunit, it bridges several disparate RNA helices of the 16S rRNA. Forms part of the Shine-Dalgarno cleft in the 70S ribosome. The polypeptide is Small ribosomal subunit protein uS11 (Pseudarthrobacter chlorophenolicus (strain ATCC 700700 / DSM 12829 / CIP 107037 / JCM 12360 / KCTC 9906 / NCIMB 13794 / A6) (Arthrobacter chlorophenolicus)).